Reading from the N-terminus, the 522-residue chain is Nuclear pore glycoprotein p62 (522 aa).

An N-acetylserine modification is found at serine 2. Tandem repeats lie at residues phenylalanine 6–glycine 7, phenylalanine 44–glycine 45, phenylalanine 76–glycine 77, phenylalanine 114–glycine 115, and phenylalanine 142–glycine 143. The segment at phenylalanine 6 to glycine 143 is 5 X 2 AA repeats of F-G. Over residues serine 169 to serine 179 the composition is skewed to polar residues. Disordered regions lie at residues serine 169–threonine 215 and alanine 260–threonine 288. Composition is skewed to low complexity over residues alanine 180–threonine 215 and glycine 262–threonine 288. Positions methionine 328–leucine 458 are required for centrosome localization. The stretch at methionine 328 to leucine 458 forms a coiled coil. An O-linked (GlcNAc) threonine glycan is attached at threonine 373. Residues serine 408 and serine 418 each carry the phosphoserine modification. Residue serine 468 is glycosylated (O-linked (GlcNAc) serine).

It belongs to the nucleoporin NSP1/NUP62 family. In terms of assembly, component of the p62 complex, a complex at least composed of NUP62, NUP54, and NUP58. Interacts with NUP88. Interacts with NUTF2. Interacts with HIKESHI. Interacts with OSBPL8. Interacts with CAPG. Interacts with SAS6 and TUBG1 at the centrosome. Interacts with MCM3AP isoform GANP. As to quaternary structure, (Microbial infection) Interacts with Epstein-barr virus BGLF4; this interaction allows BGLF4 nuclear entry. O-glycosylated. Contains about 10 N-acetylglucosamine side chain sites predicted for the entire protein, among which only one in the C-terminal. In terms of processing, the inner channel of the NPC has a different redox environment from the cytoplasm and allows the formation of interchain disulfide bonds between some nucleoporins, the significant increase of these linkages upon oxidative stress reduces the permeability of the NPC.

Its subcellular location is the nucleus. It is found in the nuclear pore complex. The protein resides in the cytoplasm. The protein localises to the cytoskeleton. It localises to the spindle pole. Its subcellular location is the nucleus envelope. It is found in the microtubule organizing center. The protein resides in the centrosome. In terms of biological role, essential component of the nuclear pore complex. The N-terminal is probably involved in nucleocytoplasmic transport. The C-terminal is involved in protein-protein interaction probably via coiled-coil formation, promotes its association with centrosomes and may function in anchorage of p62 to the pore complex. Plays a role in mitotic cell cycle progression by regulating centrosome segregation, centriole maturation and spindle orientation. It might be involved in protein recruitment to the centrosome after nuclear breakdown. The polypeptide is Nuclear pore glycoprotein p62 (NUP62) (Homo sapiens (Human)).